The primary structure comprises 126 residues: Protein ApaG (126 aa).

The region spanning 2–126 (SALDNSIRVE…FRLATPGLLH (125 aa)) is the ApaG domain.

This Shewanella oneidensis (strain ATCC 700550 / JCM 31522 / CIP 106686 / LMG 19005 / NCIMB 14063 / MR-1) protein is Protein ApaG.